Here is a 743-residue protein sequence, read N- to C-terminus: Apo-petrobactin exporter (743 aa).

12 helical membrane-spanning segments follow: residues 20–40, 199–219, 223–243, 258–278, 303–323, 337–357, 406–426, 561–581, 584–604, 613–633, 672–692, and 694–714; these read WITL…LPQV, ADVK…ILLY, ILAI…SPTL, AISI…LFLI, GGAI…LLLA, VAVF…LLIF, WTII…VPRI, DEAV…LVYL, IVAM…ALGA, MGAP…LVAL, AGLI…QVLV, and FGIV…PLLV.

This sequence belongs to the resistance-nodulation-cell division (RND) (TC 2.A.6) family. MmpL subfamily.

It is found in the cell membrane. Its function is as follows. Exports the siderophore petrobactin. The chain is Apo-petrobactin exporter from Bacillus anthracis.